An 879-amino-acid chain; its full sequence is Alanine--tRNA ligase (879 aa).

Residues His566, His570, Cys668, and His672 each contribute to the Zn(2+) site.

Belongs to the class-II aminoacyl-tRNA synthetase family. Zn(2+) is required as a cofactor.

It is found in the cytoplasm. The catalysed reaction is tRNA(Ala) + L-alanine + ATP = L-alanyl-tRNA(Ala) + AMP + diphosphate. In terms of biological role, catalyzes the attachment of alanine to tRNA(Ala) in a two-step reaction: alanine is first activated by ATP to form Ala-AMP and then transferred to the acceptor end of tRNA(Ala). Also edits incorrectly charged Ser-tRNA(Ala) and Gly-tRNA(Ala) via its editing domain. The chain is Alanine--tRNA ligase from Listeria innocua serovar 6a (strain ATCC BAA-680 / CLIP 11262).